A 181-amino-acid polypeptide reads, in one-letter code: NADH-quinone oxidoreductase subunit I (181 aa).

4Fe-4S ferredoxin-type domains are found at residues 51–80 (TRNS…LKKS) and 90–119 (KSFQ…LTPD). 8 residues coordinate [4Fe-4S] cluster: Cys60, Cys63, Cys66, Cys70, Cys99, Cys102, Cys105, and Cys109.

This sequence belongs to the complex I 23 kDa subunit family. NDH-1 is composed of 13 different subunits. Subunits NuoA, H, J, K, L, M, N constitute the membrane sector of the complex. It depends on [4Fe-4S] cluster as a cofactor.

It localises to the cell membrane. It catalyses the reaction a quinone + NADH + 5 H(+)(in) = a quinol + NAD(+) + 4 H(+)(out). Functionally, NDH-1 shuttles electrons from NADH, via FMN and iron-sulfur (Fe-S) centers, to quinones in the respiratory chain. The immediate electron acceptor for the enzyme in this species is believed to be ubiquinone. Couples the redox reaction to proton translocation (for every two electrons transferred, four hydrogen ions are translocated across the cytoplasmic membrane), and thus conserves the redox energy in a proton gradient. This chain is NADH-quinone oxidoreductase subunit I, found in Buchnera aphidicola subsp. Cinara cedri (strain Cc).